We begin with the raw amino-acid sequence, 754 residues long: NAD(P)H-quinone oxidoreductase subunit 5, chloroplastic (754 aa).

16 consecutive transmembrane segments (helical) span residues 8-28 (FWIITFISLPVPILIGVGLLL), 40-60 (WVFPSVLLLSIIMLFSTYLAI), 89-109 (VDPLTSIMLILITTVGILVLI), 125-145 (FAYMSFFNTSMVGLVTSSNLI), 147-167 (IYFFWELVGMCSYLLIGFWFT), 185-205 (GDFGLLLGILGFYWITGSLEF), 219-239 (NEVNLLFATLCAFLLFAGAIA), 258-278 (TPISALIHAATMVAAGIFLGA), 280-300 (LLPLFIVMPYIMNLIALLGII), 327-347 (LGYMMLALGMGSYRAALFHLI), 354-374 (ALLFLGSGSIIHSMESIVGYS), 396-416 (TSFLLGTLSLCGIPPLGCFWS), 425-445 (WLYSPIFAIIAFSTAGLTAFY), 552-572 (FSMLVLGLFTLFIGIIGIPFF), 608-628 (FITNATYSVSIASFGILIASF), and 733-753 (LVYISYVLIFLLIYSRGVLFF).

It belongs to the complex I subunit 5 family. In terms of assembly, NDH is composed of at least 16 different subunits, 5 of which are encoded in the nucleus.

It localises to the plastid. The protein resides in the chloroplast thylakoid membrane. The catalysed reaction is a plastoquinone + NADH + (n+1) H(+)(in) = a plastoquinol + NAD(+) + n H(+)(out). It carries out the reaction a plastoquinone + NADPH + (n+1) H(+)(in) = a plastoquinol + NADP(+) + n H(+)(out). In terms of biological role, NDH shuttles electrons from NAD(P)H:plastoquinone, via FMN and iron-sulfur (Fe-S) centers, to quinones in the photosynthetic chain and possibly in a chloroplast respiratory chain. The immediate electron acceptor for the enzyme in this species is believed to be plastoquinone. Couples the redox reaction to proton translocation, and thus conserves the redox energy in a proton gradient. This chain is NAD(P)H-quinone oxidoreductase subunit 5, chloroplastic (ndhF), found in Morus indica (Mulberry).